The following is a 117-amino-acid chain: Prefoldin subunit beta (117 aa).

Belongs to the prefoldin subunit beta family. As to quaternary structure, heterohexamer of two alpha and four beta subunits.

The protein localises to the cytoplasm. Functionally, molecular chaperone capable of stabilizing a range of proteins. Seems to fulfill an ATP-independent, HSP70-like function in archaeal de novo protein folding. The polypeptide is Prefoldin subunit beta (Methanococcoides burtonii (strain DSM 6242 / NBRC 107633 / OCM 468 / ACE-M)).